The chain runs to 601 residues: Sodium-dependent phosphate transport protein 2C (601 aa).

The Cytoplasmic portion of the chain corresponds to 1–75 (MPNSLAGGQV…RRVVSSFLKA (75 aa)). The residue at position 4 (S4) is a Phosphoserine. The helical transmembrane segment at 76–96 (CGLLGSLYFFICSLDILSSAF) threads the bilayer. At 97 to 110 (QLLGSKMAGDIFKD) the chain is on the extracellular side. A helical transmembrane segment spans residues 111–131 (NVVLSNPVAGLVIGVLVTVLV). Topologically, residues 132-187 (QSSSTSSSIVVSMVASKLLTVQVSVPIIMGVNVGTSITSTLVSMAQSGDRDEFQRA) are cytoplasmic. The helical transmembrane segment at 188–208 (FSGSAVHGIFNWLTVLVLLPL) threads the bilayer. Residues 209 to 324 (ESATAALERL…FAGSKLTDLA (116 aa)) are Extracellular-facing. N-linked (GlcNAc...) asparagine glycans are attached at residues N264, N267, and N299. C275 and C311 are oxidised to a cystine. Residues 325–345 (VGFILLAGSLLVLCVCLVLIV) form a helical membrane-spanning segment. Topologically, residues 346–369 (KLLNSVLKGRIAQAVKTVINADFP) are cytoplasmic. The chain crosses the membrane as a helical span at residues 370-390 (FPFGWLSGYLAILVGAGLTFL). Residues 391–441 (LQSSSVFTAAIVPLMGVGVIDLERAYPLFLGSNIGTTTTALLAALASPADM) lie on the Extracellular side of the membrane. The helical transmembrane segment at 442–462 (LIFAVQVALIHFFFNLAGILL) threads the bilayer. Topologically, residues 463 to 487 (WYLVPVLRLPIPLAKRFGNLTAQYR) are cytoplasmic. Residues 488-508 (WVAIVYLLLTFLLLPLAAFGL) form a helical membrane-spanning segment. Residues 509–512 (SLAG) are Extracellular-facing. A helical transmembrane segment spans residues 513–533 (GTVLAAVGGPLVGLVLLIILV). The Cytoplasmic segment spans residues 534–601 (NVLQQHRPSW…NPQVIASQQL (68 aa)).

This sequence belongs to the SLC34A transporter family. In terms of tissue distribution, expressed only in the kidney.

It localises to the apical cell membrane. The enzyme catalyses 2 Na(+)(out) + phosphate(out) = 2 Na(+)(in) + phosphate(in). Functionally, involved in actively transporting phosphate into cells via Na(+) cotransport in the renal brush border membrane. The cotransport has a Na(+):Pi stoichiometry of 2:1 and is electroneutral. This is Sodium-dependent phosphate transport protein 2C (Slc34a3) from Mus musculus (Mouse).